Reading from the N-terminus, the 465-residue chain is Fumarate hydratase class II (465 aa).

Substrate is bound by residues 99–101, 130–133, 140–142, and Thr188; these read SGT, HPND, and STN. His189 acts as the Proton donor/acceptor in catalysis. The active site involves Ser319. Substrate is bound by residues Ser320 and 325-327; that span reads KVN.

Belongs to the class-II fumarase/aspartase family. Fumarase subfamily. In terms of assembly, homotetramer.

Its subcellular location is the cytoplasm. It catalyses the reaction (S)-malate = fumarate + H2O. Its pathway is carbohydrate metabolism; tricarboxylic acid cycle; (S)-malate from fumarate: step 1/1. Involved in the TCA cycle. Catalyzes the stereospecific interconversion of fumarate to L-malate. The polypeptide is Fumarate hydratase class II (Prochlorococcus marinus (strain SARG / CCMP1375 / SS120)).